A 543-amino-acid chain; its full sequence is CTP synthase (543 aa).

The interval 1-265 is amidoligase domain; sequence MTRFVFITGG…DTEVLRHFGL (265 aa). Residue S13 participates in CTP binding. UTP is bound at residue S13. 14–19 is an ATP binding site; it reads SLGKGI. Y54 is a binding site for L-glutamine. D71 lines the ATP pocket. Mg(2+) contacts are provided by D71 and E139. CTP is bound by residues 146-148, 186-191, and K222; these read DIE and KTKPTQ. UTP contacts are provided by residues 186–191 and K222; that span reads KTKPTQ. The 252-residue stretch at 291–542 folds into the Glutamine amidotransferase type-1 domain; it reads RIAVVGKYTA…VGAAVKKMRL (252 aa). G354 is a binding site for L-glutamine. Residue C381 is the Nucleophile; for glutamine hydrolysis of the active site. Residues 382–385, E405, and R470 each bind L-glutamine; that span reads FGMQ. Active-site residues include H515 and E517.

The protein belongs to the CTP synthase family. As to quaternary structure, homotetramer.

It catalyses the reaction UTP + L-glutamine + ATP + H2O = CTP + L-glutamate + ADP + phosphate + 2 H(+). The enzyme catalyses L-glutamine + H2O = L-glutamate + NH4(+). It carries out the reaction UTP + NH4(+) + ATP = CTP + ADP + phosphate + 2 H(+). It functions in the pathway pyrimidine metabolism; CTP biosynthesis via de novo pathway; CTP from UDP: step 2/2. With respect to regulation, allosterically activated by GTP, when glutamine is the substrate; GTP has no effect on the reaction when ammonia is the substrate. The allosteric effector GTP functions by stabilizing the protein conformation that binds the tetrahedral intermediate(s) formed during glutamine hydrolysis. Inhibited by the product CTP, via allosteric rather than competitive inhibition. In terms of biological role, catalyzes the ATP-dependent amination of UTP to CTP with either L-glutamine or ammonia as the source of nitrogen. Regulates intracellular CTP levels through interactions with the four ribonucleotide triphosphates. The sequence is that of CTP synthase from Gluconacetobacter diazotrophicus (strain ATCC 49037 / DSM 5601 / CCUG 37298 / CIP 103539 / LMG 7603 / PAl5).